A 478-amino-acid chain; its full sequence is tRNA modification GTPase MnmE (478 aa).

Residues arginine 36, glutamate 94, and lysine 133 each contribute to the (6S)-5-formyl-5,6,7,8-tetrahydrofolate site. Positions 230–402 (GIHVVLAGRP…LVETLCAKVG (173 aa)) constitute a TrmE-type G domain. Asparagine 240 is a K(+) binding site. Residues 240-245 (NAGKSS), 259-265 (TDVAGTT), and 284-287 (DTAG) each bind GTP. Mg(2+) is bound at residue serine 244. K(+) contacts are provided by threonine 259, valine 261, and threonine 264. Position 265 (threonine 265) interacts with Mg(2+). Residue lysine 478 coordinates (6S)-5-formyl-5,6,7,8-tetrahydrofolate.

Belongs to the TRAFAC class TrmE-Era-EngA-EngB-Septin-like GTPase superfamily. TrmE GTPase family. Homodimer. Heterotetramer of two MnmE and two MnmG subunits. Requires K(+) as cofactor.

It localises to the cytoplasm. In terms of biological role, exhibits a very high intrinsic GTPase hydrolysis rate. Involved in the addition of a carboxymethylaminomethyl (cmnm) group at the wobble position (U34) of certain tRNAs, forming tRNA-cmnm(5)s(2)U34. This Psychrobacter arcticus (strain DSM 17307 / VKM B-2377 / 273-4) protein is tRNA modification GTPase MnmE.